Here is a 391-residue protein sequence, read N- to C-terminus: MVTQNKKILIITGSFGNGHMQVTQSIVNQLNDMNLDHLSVIEHDLFMEAHPILTSICKKWYINSFKYFRNMYKGFYYSRPDKLDKCFYKYYGLNKLINLLIKEKPDLILLTFPTPVMSVLTEQFNINIPVATVMTDYRLHKNWITPYSTRYYVATKETKKDFIDVGIDPSTVKVTGIPIDNKFETPINQKQWLIDNNLDPDKQTILMSAGAFGVSKGFDTMITDILAKSANAQVVMICGKSKELKRSLTAKFKSNENVLILGYTKHMNEWMASSQLMITKPGGITITEGFARCIPMIFLNPAPGQELENALYFEEKGFGKIADTPEEAIKIVASLTNGNEQLTNMISTMEQDKIKYATQTICRDLLDLIGHSSQPQEIYGKVPLYARFFVK.

This sequence belongs to the glycosyltransferase 28 family. UgtP subfamily.

It is found in the cell membrane. It carries out the reaction a 1,2-diacyl-3-O-(beta-D-glucopyranosyl)-sn-glycerol + UDP-alpha-D-glucose = a 1,2-diacyl-3-O-(beta-D-Glc-(1-&gt;6)-beta-D-Glc)-sn-glycerol + UDP + H(+). It catalyses the reaction a 1,2-diacyl-sn-glycerol + UDP-alpha-D-glucose = a 1,2-diacyl-3-O-(beta-D-glucopyranosyl)-sn-glycerol + UDP + H(+). The protein operates within glycolipid metabolism; diglucosyl-diacylglycerol biosynthesis. In terms of biological role, processive glucosyltransferase involved in the biosynthesis of both the bilayer- and non-bilayer-forming membrane glucolipids. Is able to successively transfer two glucosyl residues to diacylglycerol (DAG), thereby catalyzing the formation of beta-monoglucosyl-DAG (3-O-(beta-D-glucopyranosyl)-1,2-diacyl-sn-glycerol) and beta-diglucosyl-DAG (3-O-(beta-D-glucopyranosyl-beta-(1-&gt;6)-D-glucopyranosyl)-1,2-diacyl-sn-glycerol). Beta-diglucosyl-DAG is the predominant glycolipid found in Bacillales and is also used as a membrane anchor for lipoteichoic acid (LTA). This is Processive diacylglycerol beta-glucosyltransferase from Staphylococcus aureus (strain bovine RF122 / ET3-1).